We begin with the raw amino-acid sequence, 287 residues long: MINLRQQMPHYLRLMRFDKPVGIFLLLWPTLWAVWIAAKGAPSFKIAVIFIAGSVVMRAAGCIVNDFADRHLDKHVQRTQMRPLASGSVSVTEAMLLFAVLSLIAFTLVLLLNRLTVELAVIGILLALVYPFLKRFTHLPQLWLGVAFSWSIPMAFAATVGHVPAVAWLLFFAAVLWPIVYDTQYAMIDREDDVKVGIKSTAILFGRYDRLMIGLLQGSVLLTFGLLGWYLRFNYWFYLGLLVALGLMCYQQFLIRHRKPPDCFAAFRNNNWVGFFIFLGILLTYRN.

The next 9 helical transmembrane spans lie at 21 to 41 (VGIF…AKGA), 44 to 64 (FKIA…GCIV), 91 to 111 (VTEA…LVLL), 112 to 132 (LNRL…VYPF), 139 to 159 (LPQL…FAAT), 160 to 180 (VGHV…WPIV), 211 to 231 (LMIG…GWYL), 235 to 255 (YWFY…QFLI), and 263 to 283 (CFAA…GILL).

It belongs to the UbiA prenyltransferase family. Requires Mg(2+) as cofactor.

It is found in the cell inner membrane. The enzyme catalyses all-trans-octaprenyl diphosphate + 4-hydroxybenzoate = 4-hydroxy-3-(all-trans-octaprenyl)benzoate + diphosphate. It participates in cofactor biosynthesis; ubiquinone biosynthesis. In terms of biological role, catalyzes the prenylation of para-hydroxybenzoate (PHB) with an all-trans polyprenyl group. Mediates the second step in the final reaction sequence of ubiquinone-8 (UQ-8) biosynthesis, which is the condensation of the polyisoprenoid side chain with PHB, generating the first membrane-bound Q intermediate 3-octaprenyl-4-hydroxybenzoate. The sequence is that of 4-hydroxybenzoate octaprenyltransferase from Coxiella burnetii (strain CbuG_Q212) (Coxiella burnetii (strain Q212)).